Reading from the N-terminus, the 155-residue chain is uncharacterized protein (155 aa).

The 62-residue stretch at 4–65 (IDEIDEIIVR…VVDTSFFGEF (62 aa)) folds into the HTH asnC-type domain. A DNA-binding region (H-T-H motif) is located at residues 23–42 (LTELGKKVGLTASAVKNRIE).

This is an uncharacterized protein from Pyrococcus abyssi (strain GE5 / Orsay).